Here is a 1070-residue protein sequence, read N- to C-terminus: DNA-directed RNA polymerase subunit beta (1070 aa).

This sequence belongs to the RNA polymerase beta chain family. In plastids the minimal PEP RNA polymerase catalytic core is composed of four subunits: alpha, beta, beta', and beta''. When a (nuclear-encoded) sigma factor is associated with the core the holoenzyme is formed, which can initiate transcription.

It localises to the plastid. The protein resides in the chloroplast. The enzyme catalyses RNA(n) + a ribonucleoside 5'-triphosphate = RNA(n+1) + diphosphate. In terms of biological role, DNA-dependent RNA polymerase catalyzes the transcription of DNA into RNA using the four ribonucleoside triphosphates as substrates. The polypeptide is DNA-directed RNA polymerase subunit beta (Buxus microphylla (Littleleaf boxwood)).